The primary structure comprises 126 residues: RutC family protein SSO3206 (126 aa).

Belongs to the RutC family.

This is RutC family protein SSO3206 from Saccharolobus solfataricus (strain ATCC 35092 / DSM 1617 / JCM 11322 / P2) (Sulfolobus solfataricus).